The chain runs to 325 residues: Ribosomal RNA small subunit methyltransferase C (325 aa).

The protein belongs to the methyltransferase superfamily. RsmC family. As to quaternary structure, monomer.

It localises to the cytoplasm. It carries out the reaction guanosine(1207) in 16S rRNA + S-adenosyl-L-methionine = N(2)-methylguanosine(1207) in 16S rRNA + S-adenosyl-L-homocysteine + H(+). Specifically methylates the guanine in position 1207 of 16S rRNA in the 30S particle. The protein is Ribosomal RNA small subunit methyltransferase C of Alcanivorax borkumensis (strain ATCC 700651 / DSM 11573 / NCIMB 13689 / SK2).